The primary structure comprises 247 residues: Acidic leucine-rich nuclear phosphoprotein 32 family member A (247 aa).

Thr15 carries the post-translational modification Phosphothreonine. Ser17 bears the Phosphoserine mark. 4 LRR repeats span residues 18-41 (DVKE…TDEF), 43-64 (ELEF…PKLN), 65-87 (KLKK…AEKC), and 89-110 (NLKH…EPLK). Positions 123–161 (CEVTNLNAYRENVFKLLPQVMYLDGYDRDNKEAPDSDVE) constitute an LRRCT domain. The segment at 150 to 172 (RDNKEAPDSDVEGYVEDDDEEDE) is necessary for tumor-suppressive function. A disordered region spans residues 150–247 (RDNKEAPDSD…EPDDEGQEDD (98 aa)). The segment covering 157–230 (DSDVEGYVED…EDEEDAAEEE (74 aa)) has biased composition (acidic residues). Ser158 and Ser202 each carry phosphoserine. The interval 165 to 247 (EDDDEEDEDE…EPDDEGQEDD (83 aa)) is interaction with E4F1.

Belongs to the ANP32 family. Component of the SET complex, composed of at least ANP32A, APEX1, HMGB2, NME1, SET and TREX1. Directly interacts with SET. Interacts with ATXN1/SCA1. Interacts with MAP1B. Interacts with ELAVL1. Part of the INHAT (inhibitor of histone acetyltransferases) complex. Interacts with E4F1. Post-translationally, phosphorylated on serine residues, at least in part by casein kinase 2/CK2. In terms of processing, some glutamate residues are glycylated by TTLL8. This modification occurs exclusively on glutamate residues and results in a glycine chain on the gamma-carboxyl group. As to expression, widely distributed in the central nervous system, with an abundant expression in the cerebellum.

Its subcellular location is the nucleus. It is found in the cytoplasm. The protein localises to the endoplasmic reticulum. Its function is as follows. Multifunctional protein that is involved in the regulation of many processes including tumor suppression, apoptosis, cell cycle progression or transcription. Promotes apoptosis by favouring the activation of caspase-9/CASP9 and allowing apoptosome formation. In addition, plays a role in the modulation of histone acetylation and transcription as part of the INHAT (inhibitor of histone acetyltransferases) complex. Inhibits the histone-acetyltranferase activity of EP300/CREBBP (CREB-binding protein) and EP300/CREBBP-associated factor by histone masking. Preferentially binds to unmodified histone H3 and sterically inhibiting its acetylation and phosphorylation leading to cell growth inhibition. Participates in other biochemical processes such as regulation of mRNA nuclear-to-cytoplasmic translocation and stability by its association with ELAVL1 (Hu-antigen R). Plays a role in E4F1-mediated transcriptional repression as well as inhibition of protein phosphatase 2A. In Rattus norvegicus (Rat), this protein is Acidic leucine-rich nuclear phosphoprotein 32 family member A (Anp32a).